Here is a 224-residue protein sequence, read N- to C-terminus: Ribonuclease HII (224 aa).

Residues 17–201 (GTVIGVDEAG…VLSNLSVKKV (185 aa)) form the RNase H type-2 domain. Residues aspartate 23, glutamate 24, and aspartate 111 each contribute to the a divalent metal cation site.

This sequence belongs to the RNase HII family. Mn(2+) serves as cofactor. Requires Mg(2+) as cofactor.

It is found in the cytoplasm. The catalysed reaction is Endonucleolytic cleavage to 5'-phosphomonoester.. Endonuclease that specifically degrades the RNA of RNA-DNA hybrids. This is Ribonuclease HII from Pseudothermotoga lettingae (strain ATCC BAA-301 / DSM 14385 / NBRC 107922 / TMO) (Thermotoga lettingae).